A 293-amino-acid chain; its full sequence is Ribosomal protein L11 methyltransferase (293 aa).

Residues Thr145, Gly166, Asp188, and Asn230 each contribute to the S-adenosyl-L-methionine site.

The protein belongs to the methyltransferase superfamily. PrmA family.

It localises to the cytoplasm. It carries out the reaction L-lysyl-[protein] + 3 S-adenosyl-L-methionine = N(6),N(6),N(6)-trimethyl-L-lysyl-[protein] + 3 S-adenosyl-L-homocysteine + 3 H(+). Its function is as follows. Methylates ribosomal protein L11. The sequence is that of Ribosomal protein L11 methyltransferase from Shewanella sediminis (strain HAW-EB3).